A 374-amino-acid polypeptide reads, in one-letter code: tRNA-specific 2-thiouridylase MnmA (374 aa).

Residues 12–19 (GMSGGVDS) and Met38 each bind ATP. Residues 98-100 (NPD) form an interaction with target base in tRNA region. The Nucleophile role is filled by Cys103. Cys103 and Cys200 are disulfide-bonded. Gly127 is a binding site for ATP. The tract at residues 150–152 (KDQ) is interaction with tRNA. The active-site Cysteine persulfide intermediate is the Cys200. The interval 311–312 (RY) is interaction with tRNA.

The protein belongs to the MnmA/TRMU family.

Its subcellular location is the cytoplasm. The catalysed reaction is S-sulfanyl-L-cysteinyl-[protein] + uridine(34) in tRNA + AH2 + ATP = 2-thiouridine(34) in tRNA + L-cysteinyl-[protein] + A + AMP + diphosphate + H(+). Functionally, catalyzes the 2-thiolation of uridine at the wobble position (U34) of tRNA, leading to the formation of s(2)U34. The chain is tRNA-specific 2-thiouridylase MnmA from Enterococcus faecalis (strain ATCC 700802 / V583).